We begin with the raw amino-acid sequence, 240 residues long: Cell division protein FtsQ (240 aa).

Topologically, residues Met1–Arg7 are cytoplasmic. The chain crosses the membrane as a helical span at residues Leu8 to Phe28. Residues Asp29–Arg240 lie on the Periplasmic side of the membrane. The 69-residue stretch at Leu34–Pro102 folds into the POTRA domain.

This sequence belongs to the FtsQ/DivIB family. FtsQ subfamily. As to quaternary structure, part of a complex composed of FtsB, FtsL and FtsQ.

The protein resides in the cell inner membrane. Functionally, essential cell division protein. May link together the upstream cell division proteins, which are predominantly cytoplasmic, with the downstream cell division proteins, which are predominantly periplasmic. May control correct divisome assembly. This Thioalkalivibrio sp. (strain K90mix) protein is Cell division protein FtsQ.